The following is a 98-amino-acid chain: HssA/B-like protein 39 (98 aa).

Residues 1-21 are disordered; the sequence is MTLFSSISSMSTSMSGSKSSI.

This sequence belongs to the hssA/B family.

The sequence is that of HssA/B-like protein 39 (hssl39) from Dictyostelium discoideum (Social amoeba).